A 692-amino-acid polypeptide reads, in one-letter code: Proprotein convertase subtilisin/kexin type 9 (692 aa).

A signal peptide spans 1 to 30; the sequence is MGTVSSRRSWWPLPLPLLLLLLLGPAGARA. A propeptide spanning residues 31-152 is cleaved from the precursor; sequence QEDEDGDYEE…IEEDSSVFAQ (122 aa). Tyrosine 38 is subject to Sulfotyrosine. Serine 47 is subject to Phosphoserine. The Inhibitor I9 domain occupies 77–149; the sequence is TYVVVLKEET…VDYIEEDSSV (73 aa). Residues 155-444 enclose the Peptidase S8 domain; that stretch reads PWNLERITPA…VLTPNLVAAL (290 aa). Active-site charge relay system residues include aspartate 186 and histidine 226. Disulfide bonds link cysteine 223/cysteine 255 and cysteine 323/cysteine 358. Catalysis depends on serine 386, which acts as the Charge relay system. Residues 450 to 692 are C-terminal domain; that stretch reads RAGWQLFCRT…HLVQASQELQ (243 aa). 3 disulfides stabilise this stretch: cysteine 457–cysteine 527, cysteine 477–cysteine 526, and cysteine 486–cysteine 509. A glycan (N-linked (GlcNAc...) asparagine) is linked at asparagine 533. Intrachain disulfides connect cysteine 534/cysteine 601, cysteine 552/cysteine 600, cysteine 562/cysteine 588, cysteine 608/cysteine 679, cysteine 626/cysteine 678, and cysteine 635/cysteine 654. A Phosphoserine modification is found at serine 688.

Belongs to the peptidase S8 family. As to quaternary structure, monomer. Can self-associate to form dimers and higher multimers which may have increased LDLR degrading activity. The precursor protein but not the mature protein may form multimers. Interacts with APOB, VLDLR, LRP8/APOER2 and BACE1. The full-length immature form (pro-PCSK9) interacts with SCNN1A, SCNN1B and SCNN1G. The pro-PCSK9 form (via C-terminal domain) interacts with LDLR. Interacts (via the C-terminal domain) with ANXA2 (via repeat Annexin 1); the interaction inhibits the degradation of LDLR. The cofactor is Ca(2+). Cleavage by furin and PCSK5 generates a truncated inactive protein that is unable to induce LDLR degradation. Post-translationally, undergoes autocatalytic cleavage in the endoplasmic reticulum to release the propeptide from the N-terminus and the cleavage of the propeptide is strictly required for its maturation and activation. The cleaved propeptide however remains associated with the catalytic domain through non-covalent interactions, preventing potential substrates from accessing its active site. As a result, it is secreted from cells as a propeptide-containing, enzymatically inactive protein. In terms of processing, phosphorylation protects the propeptide against proteolysis.

The protein localises to the cytoplasm. It is found in the secreted. The protein resides in the endosome. It localises to the lysosome. Its subcellular location is the cell surface. The protein localises to the endoplasmic reticulum. It is found in the golgi apparatus. Its proteolytic activity is autoinhibited by the non-covalent binding of the propeptide to the catalytic domain. Inhibited by EGTA. Functionally, crucial player in the regulation of plasma cholesterol homeostasis. Binds to low-density lipid receptor family members: low density lipoprotein receptor (LDLR), very low density lipoprotein receptor (VLDLR), apolipoprotein E receptor (LRP1/APOER) and apolipoprotein receptor 2 (LRP8/APOER2), and promotes their degradation in intracellular acidic compartments. Acts via a non-proteolytic mechanism to enhance the degradation of the hepatic LDLR through a clathrin LDLRAP1/ARH-mediated pathway. May prevent the recycling of LDLR from endosomes to the cell surface or direct it to lysosomes for degradation. Can induce ubiquitination of LDLR leading to its subsequent degradation. Inhibits intracellular degradation of APOB via the autophagosome/lysosome pathway in a LDLR-independent manner. Involved in the disposal of non-acetylated intermediates of BACE1 in the early secretory pathway. Inhibits epithelial Na(+) channel (ENaC)-mediated Na(+) absorption by reducing ENaC surface expression primarily by increasing its proteasomal degradation. Regulates neuronal apoptosis via modulation of LRP8/APOER2 levels and related anti-apoptotic signaling pathways. The chain is Proprotein convertase subtilisin/kexin type 9 (PCSK9) from Macaca mulatta (Rhesus macaque).